The following is a 236-amino-acid chain: MKTIVVCSGGLDSVSLAHKMAAEQQLIGLVSFDYGQRHRKELDFAARCAARLAVPHHIIDIAAIGGHLSGSALTDNVEVPDGHYAEETMKATVVPNRNAIMLAIAFGLAAAQKADAVAVAVHGGDHFIYPDCRPGFIDAFQRMQNAALDGYASVRLLAPYVDVSKAAIVADGEKHATPFAETWSCYKGGRLHCGRCGTCVERREAFHLAGISDPTDYEDRDFWKAAVSQYSAKEVR.

7–17 (CSGGLDSVSLA) contributes to the ATP binding site. Zn(2+)-binding residues include Cys-185, Cys-193, Cys-196, and Cys-199.

Belongs to the QueC family. Zn(2+) serves as cofactor.

The catalysed reaction is 7-carboxy-7-deazaguanine + NH4(+) + ATP = 7-cyano-7-deazaguanine + ADP + phosphate + H2O + H(+). It functions in the pathway purine metabolism; 7-cyano-7-deazaguanine biosynthesis. Functionally, catalyzes the ATP-dependent conversion of 7-carboxy-7-deazaguanine (CDG) to 7-cyano-7-deazaguanine (preQ(0)). This is 7-cyano-7-deazaguanine synthase from Rhizobium etli (strain CIAT 652).